Reading from the N-terminus, the 824-residue chain is Intraflagellar transport protein 88 homolog (824 aa).

Disordered regions lie at residues 1–27 (MENV…PAYD) and 111–134 (AFDP…DSPE). TPR repeat units follow at residues 196 to 229 (YSVL…KMFS), 232 to 265 (GRLK…IPSV), 271 to 304 (IKIM…APSL), 415 to 448 (NDLE…DSRV), 450 to 483 (SAAA…DRYN), 484 to 517 (PSAL…DSSC), 518 to 551 (TEAL…LRNS), 552 to 585 (AQVL…VPTD), 586 to 619 (SQAL…FPSN), 620 to 653 (IEVI…QPTQ), and 654 to 687 (VKWQ…FPEN). The segment covering 721–731 (EMREQRIKSGR) has biased composition (basic and acidic residues). The disordered stretch occupies residues 721 to 824 (EMREQRIKSG…EELGDDLLPE (104 aa)). Residues 748–757 (DSGQNNSASS) are compositionally biased toward polar residues. Over residues 797–808 (ERPKTAAKKRID) the composition is skewed to basic and acidic residues. Residues 809–824 (EDDFADEELGDDLLPE) are compositionally biased toward acidic residues.

In terms of assembly, component of the IFT complex B, at least composed of IFT20, IFT22, IFT25, IFT27, IFT46, IFT52, TRAF3IP1/IFT54, IFT57, IFT74, IFT80, IFT81, and IFT88. Interacts with IFT20, IFT22, IFT25, IFT27, IFT52, TRAF3IP1, IFT74, IFT80 and IFT81. Interacts with IFT172. Interacts with IFT57. Interacts with IFT46. Interacts with IFT70B. Interacts with C2CD3. Interacts with ENTR1 (via N-terminus). Interacts with LRRC56. Interacts with DZIP1. Interacts with CCDC38. Interacts with CCDC146. Interacts with CFAP53. In terms of tissue distribution, testis.

It localises to the cytoplasm. The protein localises to the cytoskeleton. Its subcellular location is the microtubule organizing center. The protein resides in the centrosome. It is found in the centriole. It localises to the cilium basal body. The protein localises to the cell projection. Its subcellular location is the cilium. The protein resides in the flagellum. In terms of biological role, positively regulates primary cilium biogenesis. Also involved in autophagy since it is required for trafficking of ATG16L and the expansion of the autophagic compartment. The chain is Intraflagellar transport protein 88 homolog (Ift88) from Mus musculus (Mouse).